The following is a 450-amino-acid chain: Benzene 1,2-dioxygenase subunit alpha (450 aa).

In terms of domain architecture, Rieske spans 54-163; it reads WLLLGHETQI…VETYKGLIFA (110 aa). 4 residues coordinate [2Fe-2S] cluster: Cys96, His98, Cys116, and His119. Fe cation is bound by residues His222 and His228.

It belongs to the bacterial ring-hydroxylating dioxygenase alpha subunit family. This dioxygenase system consists of four proteins: the two subunits of the hydroxylase component (BnzA and BnzB), a ferredoxin (BnzC) and a ferredoxin reductase (BnzD). Requires [2Fe-2S] cluster as cofactor. It depends on Fe cation as a cofactor.

The catalysed reaction is benzene + NADH + O2 + H(+) = cis-1,2-dihydrobenzene-1,2-diol + NAD(+). It catalyses the reaction toluene + NADH + O2 + H(+) = (1S,2R)-3-methylcyclohexa-3,5-diene-1,2-diol + NAD(+). It participates in aromatic compound metabolism; benzene degradation; catechol from benzene: step 1/2. Its pathway is xenobiotic degradation; toluene degradation. The protein operates within xenobiotic degradation; xylene degradation. Its function is as follows. Catalyzes both the oxidation of benzene and toluene. The sequence is that of Benzene 1,2-dioxygenase subunit alpha (bnzA) from Pseudomonas putida (strain ATCC 700007 / DSM 6899 / JCM 31910 / BCRC 17059 / LMG 24140 / F1).